The primary structure comprises 156 residues: MNVIEGVVATPNARVAIAIARFNNFINDSLLDGAIDALKRIGQVSDDNITVVWVPGAYELPLVANVLAKTNRYDAVIALGTVIRGGTAHFEYVAGEASSGLSSVAMNSDIPVAFGVLTTESIEQAIERAGTKAGNKGAEAALTALEMINVIKAIKG.

5-amino-6-(D-ribitylamino)uracil is bound by residues F22, 57–59, and 81–83; these read AYE and TVI. 86-87 provides a ligand contact to (2S)-2-hydroxy-3-oxobutyl phosphate; it reads GT. H89 functions as the Proton donor in the catalytic mechanism. F114 is a 5-amino-6-(D-ribitylamino)uracil binding site. R128 is a binding site for (2S)-2-hydroxy-3-oxobutyl phosphate.

This sequence belongs to the DMRL synthase family. In terms of assembly, forms an icosahedral capsid composed of 60 subunits, arranged as a dodecamer of pentamers.

The enzyme catalyses (2S)-2-hydroxy-3-oxobutyl phosphate + 5-amino-6-(D-ribitylamino)uracil = 6,7-dimethyl-8-(1-D-ribityl)lumazine + phosphate + 2 H2O + H(+). It participates in cofactor biosynthesis; riboflavin biosynthesis; riboflavin from 2-hydroxy-3-oxobutyl phosphate and 5-amino-6-(D-ribitylamino)uracil: step 1/2. Its function is as follows. Catalyzes the formation of 6,7-dimethyl-8-ribityllumazine by condensation of 5-amino-6-(D-ribitylamino)uracil with 3,4-dihydroxy-2-butanone 4-phosphate. This is the penultimate step in the biosynthesis of riboflavin. This is 6,7-dimethyl-8-ribityllumazine synthase from Yersinia pseudotuberculosis serotype O:1b (strain IP 31758).